The primary structure comprises 132 residues: Small ribosomal subunit protein uS8 (132 aa).

It belongs to the universal ribosomal protein uS8 family. Part of the 30S ribosomal subunit. Contacts proteins S5 and S12.

In terms of biological role, one of the primary rRNA binding proteins, it binds directly to 16S rRNA central domain where it helps coordinate assembly of the platform of the 30S subunit. The chain is Small ribosomal subunit protein uS8 from Brucella anthropi (strain ATCC 49188 / DSM 6882 / CCUG 24695 / JCM 21032 / LMG 3331 / NBRC 15819 / NCTC 12168 / Alc 37) (Ochrobactrum anthropi).